Consider the following 309-residue polypeptide: MNHLLSTADLKLDDALLVLDTADRMARVADAPVRKLPTLRGRTVVNLFFEDSTRTRTSFEVAAKRLSADVINFSARGSSVSKGESLKDTAQTLEAMGADAVVCRHPASGAPHRLASWVRGSVVNAGDGTHEHPTQALLDAFTIRRRLGRLDGLAVTIVGDVLHSRVARSNVWLLTTLGARVTVVAPPTLLPLGISGWPVEVSYDLESVLPKSDVVMMLRVQRERMSAAFFPTEREYSRRYGLDADRAALMPEHALVMHPGPMVRGMEIASSVADSPRSTVVEQVANGVSVRMAVLYLLLGGSGAERESS.

2 residues coordinate carbamoyl phosphate: Arg54 and Thr55. Residue Lys82 coordinates L-aspartate. Carbamoyl phosphate contacts are provided by Arg104, His132, and Gln135. L-aspartate contacts are provided by Arg165 and Arg219. Positions 260 and 261 each coordinate carbamoyl phosphate.

It belongs to the aspartate/ornithine carbamoyltransferase superfamily. ATCase family. Heterododecamer (2C3:3R2) of six catalytic PyrB chains organized as two trimers (C3), and six regulatory PyrI chains organized as three dimers (R2).

The enzyme catalyses carbamoyl phosphate + L-aspartate = N-carbamoyl-L-aspartate + phosphate + H(+). It participates in pyrimidine metabolism; UMP biosynthesis via de novo pathway; (S)-dihydroorotate from bicarbonate: step 2/3. In terms of biological role, catalyzes the condensation of carbamoyl phosphate and aspartate to form carbamoyl aspartate and inorganic phosphate, the committed step in the de novo pyrimidine nucleotide biosynthesis pathway. This chain is Aspartate carbamoyltransferase catalytic subunit, found in Parafrankia sp. (strain EAN1pec).